The sequence spans 446 residues: 3-phosphoshikimate 1-carboxyvinyltransferase (446 aa).

Residues lysine 35, serine 36, and arginine 40 each contribute to the 3-phosphoshikimate site. Lysine 35 contacts phosphoenolpyruvate. 2 residues coordinate phosphoenolpyruvate: glycine 108 and arginine 137. 3-phosphoshikimate-binding residues include serine 182, glutamine 184, aspartate 332, and lysine 359. Glutamine 184 serves as a coordination point for phosphoenolpyruvate. The active-site Proton acceptor is aspartate 332. Arginine 363 and arginine 405 together coordinate phosphoenolpyruvate.

Belongs to the EPSP synthase family. Monomer.

The protein localises to the cytoplasm. It catalyses the reaction 3-phosphoshikimate + phosphoenolpyruvate = 5-O-(1-carboxyvinyl)-3-phosphoshikimate + phosphate. The protein operates within metabolic intermediate biosynthesis; chorismate biosynthesis; chorismate from D-erythrose 4-phosphate and phosphoenolpyruvate: step 6/7. In terms of biological role, catalyzes the transfer of the enolpyruvyl moiety of phosphoenolpyruvate (PEP) to the 5-hydroxyl of shikimate-3-phosphate (S3P) to produce enolpyruvyl shikimate-3-phosphate and inorganic phosphate. This chain is 3-phosphoshikimate 1-carboxyvinyltransferase, found in Acaryochloris marina (strain MBIC 11017).